Reading from the N-terminus, the 364-residue chain is MCPPNTPYQSQWHAFLHSLPKCEHHVHLEGCLEPPLIFSMARKNNVSLPSPSSNPAYTSVETLSKRYGHFSSLDDFLSFYFIGMTVLKTQSDFAELAWTYFKRAHAEGVHHTEVFFDPQVHMERGLEYRVIVDGYVDGCKRAEKELGISTRLIMCFLKHLPLESAQRLYDTALNEGDLGLDGRNPVIHGLGASSSEVGPPKDLFRPIYLGAKEKSINLTAHAGEEGDASYIAAALDMGATRIDHGIRLGEDPELMERVAREEVLLTVCPVSNLQLKCVKSVAEVPIRKFLDAGVRFSINSDDPAYFGAYILECYCAVQEAFNLSVADWRLIAENGVKGSWIGEERKNELLWRIDECVKRFEGVL.

Zn(2+) contacts are provided by H25, H27, and H221. E224 functions as the Proton donor in the catalytic mechanism. Position 301 (D301) interacts with Zn(2+). D302 lines the substrate pocket.

This sequence belongs to the metallo-dependent hydrolases superfamily. Adenosine and AMP deaminases family. Adenine deaminase type 2 subfamily. The cofactor is Zn(2+).

It is found in the cytoplasm. It localises to the nucleus. The catalysed reaction is adenine + H2O + H(+) = hypoxanthine + NH4(+). Its function is as follows. Catalyzes the hydrolytic deamination of adenine to hypoxanthine. Plays an important role in the purine salvage pathway and in nitrogen catabolism. Has no activity with adenosine as a substrate. The protein is Adenine deaminase (aah1) of Emericella nidulans (strain FGSC A4 / ATCC 38163 / CBS 112.46 / NRRL 194 / M139) (Aspergillus nidulans).